Consider the following 916-residue polypeptide: Translation initiation factor IF-2 (916 aa).

Residues 55–324 (EPKAVTPTSK…NHNANLKPVT (270 aa)) are disordered. Low complexity predominate over residues 77-88 (AAEPKAAATKPA). Basic and acidic residues-rich tracts occupy residues 98-121 (FKAE…ERRN), 129-161 (RQKD…DNRN), and 198-212 (RQSE…EAKR). A compositionally biased stretch (low complexity) spans 227 to 250 (KEQPTVEAAATAAPQAQPQTVEQV). The span at 264–281 (ARPDKSRDFSHENEDGPK) shows a compositional bias: basic and acidic residues. Low complexity predominate over residues 291-304 (KQNQVRNQKNSNWN). Positions 305 to 314 (KKNKKSKNNR) are enriched in basic residues. The tr-type G domain maps to 418–585 (ERAPVVTIMG…TVLLVAEIQE (168 aa)). Positions 427–434 (GHVDHGKT) are G1. A GTP-binding site is contributed by 427-434 (GHVDHGKT). Positions 452–456 (GITQH) are G2. Residues 473–476 (DTPG) are G3. Residues 473–477 (DTPGH) and 527–530 (NKID) each bind GTP. Residues 527–530 (NKID) form a G4 region. Residues 563 to 565 (SAK) form a G5 region.

The protein belongs to the TRAFAC class translation factor GTPase superfamily. Classic translation factor GTPase family. IF-2 subfamily.

It is found in the cytoplasm. One of the essential components for the initiation of protein synthesis. Protects formylmethionyl-tRNA from spontaneous hydrolysis and promotes its binding to the 30S ribosomal subunits. Also involved in the hydrolysis of GTP during the formation of the 70S ribosomal complex. The chain is Translation initiation factor IF-2 from Streptococcus mutans serotype c (strain ATCC 700610 / UA159).